The chain runs to 341 residues: Short chain dehydrogenase virL (341 aa).

The NADP(+) site is built by Leu49, Lys74, Asp97, Asn123, Tyr210, and Lys214. Tyr210 serves as the catalytic Proton donor. Lys214 acts as the Lowers pKa of active site Tyr in catalysis.

It belongs to the short-chain dehydrogenases/reductases (SDR) family.

It participates in secondary metabolite biosynthesis. Short chain dehydrogenase; part of the gene cluster that mediates the biosynthesis of virensols and trichoxide, fungal natural products that contain or are derived from a salicylaldehyde core. The pathway begins with the synthesis of the reduced chain in virensol C by the highly reducing polyketide synthase virA via condensation of one acetate and 8 malonate units. VirA has interesting programming rules since the first 2 ketides are fully reduced, the 3 following ketides undergo beta-dehydration, and the last 3 ketides are only reduced to beta-hydroxys to yield the trihydroxy portion. The production of aldehyde virensol C by virA alone is surprising, since virA does not contain a reductase (R) domain that is typically associated with reductive product release in HRPKS. The cupin-domain enzyme virC is involved in enhancing virA product turnover. The short-chain dehydrogenase virB then oxidizes the C-7 alcohol of virensol C to a ketone, yielding virensol D. Virensol D is further transformed to salicylaldehyde 5-deoxyaurocitrin by the short-chain dehydrogenase virD. VirD catalyzes the dehydrogenation of C-3 to form the beta-ketone aldehyde, which is followed by the generation of the nucleophilic C-2 that is required for the intramolecular aldol condensation between C-2 and C-7, itself followed by dehydration and aromatization which leads to salicylaldehyde 5-deoxyaurocitrin. While the dehydrogenation of virensol D is definitely catalyzed by virD, the aldol condensation and dehydration may be uncatalyzed or assisted by virD. The short chain dehydrogenase virG then converts salicylaldehyde 5-deoxyaurocitrin into virensol B which is further hydroxylated by the cytochrome P450 monooxygenase virE to yield the hydroquinone virensol A. VirI then may oxidize virensol A to form the quinone, while virH performs the epoxidation. Finally, the two remaining short-chain dehydrogenases, virK and virL, are probably responsible for reducing the ketones to the corresponding alcohols to furnish the epoxycyclohexanol structure in trichoxide. The polypeptide is Short chain dehydrogenase virL (Hypocrea virens (strain Gv29-8 / FGSC 10586) (Gliocladium virens)).